The sequence spans 495 residues: Dipeptide and tripeptide permease A (495 aa).

The Cytoplasmic portion of the chain corresponds to methionine 1–serine 20. The helical transmembrane segment at isoleucine 21–valine 41 threads the bilayer. Over lysine 42–serine 51 the chain is Periplasmic. The chain crosses the membrane as a helical span at residues phenylalanine 52–leucine 72. Over glycine 73–arginine 81 the chain is Cytoplasmic. Helical transmembrane passes span threonine 82–glutamate 102 and histidine 103–alanine 123. Residues asparagine 124–threonine 145 are Periplasmic-facing. A helical transmembrane segment spans residues methionine 146–alanine 166. Topologically, residues aspartate 167 to tyrosine 171 are cytoplasmic. Residues alanine 172 to methionine 192 form a helical membrane-spanning segment. The Periplasmic segment spans residues glutamine 193 to arginine 209. Residues leucine 210–leucine 230 form a helical membrane-spanning segment. Topologically, residues leucine 231 to lysine 232 are cytoplasmic. The helical transmembrane segment at histidine 233 to valine 253 threads the bilayer. Over lysine 254–lysine 266 the chain is Periplasmic. A helical membrane pass occupies residues methionine 267–methionine 287. The Cytoplasmic portion of the chain corresponds to proline 288–glutamine 312. The helical transmembrane segment at phenylalanine 313 to asparagine 333 threads the bilayer. At lysine 334–lysine 344 the chain is on the periplasmic side. Residues phenylalanine 345–tyrosine 365 traverse the membrane as a helical segment. Over alanine 366 to asparagine 375 the chain is Cytoplasmic. A helical transmembrane segment spans residues tryptophan 376–leucine 396. Topologically, residues alanine 397–glycine 409 are periplasmic. Residues phenylalanine 410–alanine 430 form a helical membrane-spanning segment. The Cytoplasmic segment spans residues glycine 431–arginine 451. The helical transmembrane segment at valine 452 to proline 472 threads the bilayer. Residues tryptophan 473–arginine 495 lie on the Periplasmic side of the membrane.

Belongs to the major facilitator superfamily. Proton-dependent oligopeptide transporter (POT/PTR) (TC 2.A.17) family. DtpA subfamily.

It localises to the cell inner membrane. Functionally, proton-dependent permease that transports di- and tripeptides. This is Dipeptide and tripeptide permease A from Chromobacterium violaceum (strain ATCC 12472 / DSM 30191 / JCM 1249 / CCUG 213 / NBRC 12614 / NCIMB 9131 / NCTC 9757 / MK).